We begin with the raw amino-acid sequence, 348 residues long: GTP 3',8-cyclase (348 aa).

The 225-residue stretch at 24-248 (PFGRAVTYLR…TDIDYQTGGP (225 aa)) folds into the Radical SAM core domain. Arg33 contacts GTP. Cys40 and Cys44 together coordinate [4Fe-4S] cluster. Position 46 (Tyr46) interacts with S-adenosyl-L-methionine. Cys47 contributes to the [4Fe-4S] cluster binding site. Position 82 (Arg82) interacts with GTP. Gly86 is a binding site for S-adenosyl-L-methionine. Thr115 is a GTP binding site. An S-adenosyl-L-methionine-binding site is contributed by Ser139. Lys175 contributes to the GTP binding site. Met209 contacts S-adenosyl-L-methionine. 2 residues coordinate [4Fe-4S] cluster: Cys272 and Cys275. GTP is bound at residue 277-279 (RVR). Residue Cys289 coordinates [4Fe-4S] cluster.

It belongs to the radical SAM superfamily. MoaA family. As to quaternary structure, monomer and homodimer. The cofactor is [4Fe-4S] cluster.

The catalysed reaction is GTP + AH2 + S-adenosyl-L-methionine = (8S)-3',8-cyclo-7,8-dihydroguanosine 5'-triphosphate + 5'-deoxyadenosine + L-methionine + A + H(+). Its pathway is cofactor biosynthesis; molybdopterin biosynthesis. Its function is as follows. Catalyzes the cyclization of GTP to (8S)-3',8-cyclo-7,8-dihydroguanosine 5'-triphosphate. This Rhizobium etli (strain ATCC 51251 / DSM 11541 / JCM 21823 / NBRC 15573 / CFN 42) protein is GTP 3',8-cyclase.